A 465-amino-acid chain; its full sequence is tRNA modification GTPase MnmE (465 aa).

Residues Arg21, Glu85, and Lys124 each contribute to the (6S)-5-formyl-5,6,7,8-tetrahydrofolate site. A TrmE-type G domain is found at 220–387 (GVPVAIIGET…LQKMLINAAH (168 aa)). Position 230 (Asn230) interacts with K(+). Residues 230 to 235 (NAGKST), 249 to 255 (SDIHGTT), 274 to 277 (DTAG), and 337 to 340 (NKAD) each bind GTP. Ser234 is a binding site for Mg(2+). K(+) contacts are provided by Ser249, Ile251, and Thr254. Thr255 provides a ligand contact to Mg(2+). Lys465 provides a ligand contact to (6S)-5-formyl-5,6,7,8-tetrahydrofolate.

The protein belongs to the TRAFAC class TrmE-Era-EngA-EngB-Septin-like GTPase superfamily. TrmE GTPase family. As to quaternary structure, homodimer. Heterotetramer of two MnmE and two MnmG subunits. It depends on K(+) as a cofactor.

The protein localises to the cytoplasm. Its function is as follows. Exhibits a very high intrinsic GTPase hydrolysis rate. Involved in the addition of a carboxymethylaminomethyl (cmnm) group at the wobble position (U34) of certain tRNAs, forming tRNA-cmnm(5)s(2)U34. This Bacteroides thetaiotaomicron (strain ATCC 29148 / DSM 2079 / JCM 5827 / CCUG 10774 / NCTC 10582 / VPI-5482 / E50) protein is tRNA modification GTPase MnmE.